Here is a 177-residue protein sequence, read N- to C-terminus: Large ribosomal subunit protein uL6 (177 aa).

It belongs to the universal ribosomal protein uL6 family. Part of the 50S ribosomal subunit.

This protein binds to the 23S rRNA, and is important in its secondary structure. It is located near the subunit interface in the base of the L7/L12 stalk, and near the tRNA binding site of the peptidyltransferase center. The sequence is that of Large ribosomal subunit protein uL6 from Rickettsia akari (strain Hartford).